The primary structure comprises 360 residues: Peptide chain release factor 1 (360 aa).

Residue Gln235 is modified to N5-methylglutamine. Residues 286-311 (QAQAQADTRRNLLGSGDRSDKIRTYN) are disordered.

The protein belongs to the prokaryotic/mitochondrial release factor family. Methylated by PrmC. Methylation increases the termination efficiency of RF1.

It is found in the cytoplasm. Functionally, peptide chain release factor 1 directs the termination of translation in response to the peptide chain termination codons UAG and UAA. This chain is Peptide chain release factor 1, found in Histophilus somni (strain 2336) (Haemophilus somnus).